A 203-amino-acid chain; its full sequence is Transcriptional regulator GfcR (203 aa).

It belongs to the purine/pyrimidine phosphoribosyltransferase family. GfcR subfamily.

The protein is Transcriptional regulator GfcR of Methanothrix thermoacetophila (strain DSM 6194 / JCM 14653 / NBRC 101360 / PT) (Methanosaeta thermophila).